The chain runs to 227 residues: H-N-H endonuclease F-TflIV (227 aa).

In terms of biological role, endonuclease that introduces double-strand break into pseudo palindromic 17 bp DNA sequence yielding 1 bp extensions with 3'-overhangs. This chain is H-N-H endonuclease F-TflIV, found in Escherichia phage T5 (Enterobacteria phage T5).